We begin with the raw amino-acid sequence, 313 residues long: tRNA dimethylallyltransferase (313 aa).

Residue 11 to 18 (GPTASGKT) coordinates ATP. Position 13 to 18 (13 to 18 (TASGKT)) interacts with substrate. Interaction with substrate tRNA stretches follow at residues 36–39 (DSRQ) and 160–164 (QRLIR).

The protein belongs to the IPP transferase family. Monomer. Mg(2+) serves as cofactor.

It carries out the reaction adenosine(37) in tRNA + dimethylallyl diphosphate = N(6)-dimethylallyladenosine(37) in tRNA + diphosphate. Functionally, catalyzes the transfer of a dimethylallyl group onto the adenine at position 37 in tRNAs that read codons beginning with uridine, leading to the formation of N6-(dimethylallyl)adenosine (i(6)A). In Chlorobaculum parvum (strain DSM 263 / NCIMB 8327) (Chlorobium vibrioforme subsp. thiosulfatophilum), this protein is tRNA dimethylallyltransferase.